We begin with the raw amino-acid sequence, 346 residues long: Fe(3+) ions import ATP-binding protein FbpC 1 (346 aa).

Positions 5–235 constitute an ABC transporter domain; that stretch reads LEVDGVDKSF…PIDVPTAEFI (231 aa). Residue 37–44 participates in ATP binding; sequence GPSGCGKT.

This sequence belongs to the ABC transporter superfamily. Fe(3+) ion importer (TC 3.A.1.10) family. As to quaternary structure, the complex is composed of two ATP-binding proteins (FbpC), two transmembrane proteins (FbpB) and a solute-binding protein (FbpA).

The protein resides in the cell membrane. The catalysed reaction is Fe(3+)(out) + ATP + H2O = Fe(3+)(in) + ADP + phosphate + H(+). Its function is as follows. Part of the ABC transporter complex FbpABC involved in Fe(3+) ions import. Responsible for energy coupling to the transport system. The sequence is that of Fe(3+) ions import ATP-binding protein FbpC 1 from Rhodococcus jostii (strain RHA1).